The chain runs to 698 residues: MENSVKMDTSGNSTPLPQRQARANNQPNKNIGKHGPQKQNEGASDGGPAEKRQRFGPNNQNGGGGSVGGGGGGGGGSGGGGGGGGQNQNKNFANKGGFGGGGNRNRNRGGNQNRSNFQNQNQNQKSTTDAPKADGGNLNDKSNEANNANQSNSNSAAQAQAQLQAQAQAHAQAQAQAHAQAQAQAQAQAHAHAQNQAFRARGGGGGGGGGGGGGGGGGGGGRDRNRGSRGGGGGGQNSGGGNNSQRGDDFFIAQRLRSISGPTHELPPIEVAQETKFSGRNRLYVGNLTNDITDEELREMFKPYGEIGEIFSNLEKNFTFLKVDYHINAEKAKRALDGSMRKGRQLRVRFAPNATILRVSNLTPFVSNELLYKSFEIFGPIERASITVDDRGKHLGEGTVEFAKKSSASACLRLCNEKCFFLTASLRPCLVEPMEVNDDNDGLPEKALNKKLQEFNQERSVGPRFADLNSFEHEYGSRWKQLHDLFKSKQDALKRELKMEEEKLDAQMEYARYGQETELSRQELRKRESDNERKKLEWEMREKQAEEMRKREEETMRRHQTEMQSRMVRQEEDMRRRQQENTLFMQAQQLNSLLDQQEGFGGGNNGGGGGGGGGGGGVGGGVGNSNFDNFGGNSNSPFEVFRGNNNSSMAGNNAGPGANNQQQDSFAAFEFGVNNMNQGGNQRGNNGGNNVPWGRRRF.

The span at 1 to 29 (MENSVKMDTSGNSTPLPQRQARANNQPNK) shows a compositional bias: polar residues. A disordered region spans residues 1 to 247 (MENSVKMDTS…SGGGNNSQRG (247 aa)). A compositionally biased stretch (gly residues) spans 61–86 (NGGGGSVGGGGGGGGGSGGGGGGGGQ). Low complexity-rich tracts occupy residues 108 to 126 (RGGN…NQKS) and 145 to 197 (ANNA…QNQA). Composition is skewed to gly residues over residues 201-220 (RGGG…GGGG) and 228-242 (SRGG…GGGN). 2 consecutive RRM domains span residues 281–353 (NRLY…FAPN) and 355–441 (TILR…DDND). Positions 484 to 582 (DLFKSKQDAL…DMRRRQQENT (99 aa)) form a coiled coil. Disordered regions lie at residues 515–571 (QETE…VRQE) and 597–698 (QEGF…RRRF). The segment covering 518 to 561 (ELSRQELRKRESDNERKKLEWEMREKQAEEMRKREEETMRRHQT) has biased composition (basic and acidic residues). Over residues 599 to 623 (GFGGGNNGGGGGGGGGGGGVGGGVG) the composition is skewed to gly residues. Low complexity-rich tracts occupy residues 624 to 636 (NSNF…NSNS) and 643 to 660 (GNNN…GANN).

Functionally, required for normal vision and courtship behavior in Drosophila. The chain is Protein no-on-transient A (nonA) from Drosophila littoralis (Fruit fly).